Reading from the N-terminus, the 469-residue chain is 3-phosphoshikimate 1-carboxyvinyltransferase (469 aa).

The disordered stretch occupies residues 21–45; sequence KDTILTHSDQPRPLQSRANGPLTGK. Residues lysine 52, serine 53, and arginine 57 each coordinate 3-phosphoshikimate. Lysine 52 lines the phosphoenolpyruvate pocket. Phosphoenolpyruvate-binding residues include glycine 125 and arginine 153. Positions 199, 201, 352, and 379 each coordinate 3-phosphoshikimate. Glutamine 201 serves as a coordination point for phosphoenolpyruvate. Aspartate 352 serves as the catalytic Proton acceptor. Arginine 383 and arginine 426 together coordinate phosphoenolpyruvate.

This sequence belongs to the EPSP synthase family. Monomer.

It is found in the cytoplasm. The enzyme catalyses 3-phosphoshikimate + phosphoenolpyruvate = 5-O-(1-carboxyvinyl)-3-phosphoshikimate + phosphate. It functions in the pathway metabolic intermediate biosynthesis; chorismate biosynthesis; chorismate from D-erythrose 4-phosphate and phosphoenolpyruvate: step 6/7. Its function is as follows. Catalyzes the transfer of the enolpyruvyl moiety of phosphoenolpyruvate (PEP) to the 5-hydroxyl of shikimate-3-phosphate (S3P) to produce enolpyruvyl shikimate-3-phosphate and inorganic phosphate. In Bradyrhizobium diazoefficiens (strain JCM 10833 / BCRC 13528 / IAM 13628 / NBRC 14792 / USDA 110), this protein is 3-phosphoshikimate 1-carboxyvinyltransferase.